The sequence spans 181 residues: Inner membrane-spanning protein YciB (181 aa).

Transmembrane regions (helical) follow at residues 10–30, 50–70, 80–100, 120–140, and 148–168; these read LIIFFALYKFYDIYVATGALI, MQLITFVMVALFGGMTLALHD, IVYVVFALGLTISQIMGKPAI, WAWVMFFSGCAALNLYVAYHL, and FKVFGLLAATFVFTLLTGGYI.

Belongs to the YciB family.

It localises to the cell inner membrane. In terms of biological role, plays a role in cell envelope biogenesis, maintenance of cell envelope integrity and membrane homeostasis. The polypeptide is Inner membrane-spanning protein YciB (Vibrio cholerae serotype O1 (strain ATCC 39541 / Classical Ogawa 395 / O395)).